We begin with the raw amino-acid sequence, 248 residues long: 2,3-bisphosphoglycerate-dependent phosphoglycerate mutase (248 aa).

Substrate contacts are provided by residues 8–15 (RHGESEWN), 21–22 (TG), Arg60, 87–90 (ERHY), Lys98, 114–115 (RR), and 183–184 (GN). Catalysis depends on His9, which acts as the Tele-phosphohistidine intermediate. The Proton donor/acceptor role is filled by Glu87.

It belongs to the phosphoglycerate mutase family. BPG-dependent PGAM subfamily.

The catalysed reaction is (2R)-2-phosphoglycerate = (2R)-3-phosphoglycerate. The protein operates within carbohydrate degradation; glycolysis; pyruvate from D-glyceraldehyde 3-phosphate: step 3/5. Catalyzes the interconversion of 2-phosphoglycerate and 3-phosphoglycerate. The protein is 2,3-bisphosphoglycerate-dependent phosphoglycerate mutase of Coprothermobacter proteolyticus (strain ATCC 35245 / DSM 5265 / OCM 4 / BT).